The chain runs to 201 residues: Ribonuclease HII (201 aa).

Positions 11–201 (LRECGCDEAG…VVDADRPTTE (191 aa)) constitute an RNase H type-2 domain. A divalent metal cation contacts are provided by Asp-17, Glu-18, and Asp-109.

It belongs to the RNase HII family. Requires Mn(2+) as cofactor. Mg(2+) serves as cofactor.

The protein localises to the cytoplasm. The enzyme catalyses Endonucleolytic cleavage to 5'-phosphomonoester.. Functionally, endonuclease that specifically degrades the RNA of RNA-DNA hybrids. This chain is Ribonuclease HII (rnhB), found in Porphyromonas gingivalis (strain ATCC BAA-308 / W83).